The following is a 334-amino-acid chain: Protein OPG181 (334 aa).

It belongs to the orthopoxvirus OPG181 family.

The chain is Protein OPG181 (OPG181) from Vaccinia virus (strain Copenhagen) (VACV).